The sequence spans 248 residues: Ubiquinone biosynthesis O-methyltransferase (248 aa).

S-adenosyl-L-methionine contacts are provided by Arg-40, Gly-71, Asp-92, and Met-135.

It belongs to the methyltransferase superfamily. UbiG/COQ3 family.

It catalyses the reaction a 3-demethylubiquinol + S-adenosyl-L-methionine = a ubiquinol + S-adenosyl-L-homocysteine + H(+). The enzyme catalyses a 3-(all-trans-polyprenyl)benzene-1,2-diol + S-adenosyl-L-methionine = a 2-methoxy-6-(all-trans-polyprenyl)phenol + S-adenosyl-L-homocysteine + H(+). The protein operates within cofactor biosynthesis; ubiquinone biosynthesis. In terms of biological role, O-methyltransferase that catalyzes the 2 O-methylation steps in the ubiquinone biosynthetic pathway. This Ruegeria pomeroyi (strain ATCC 700808 / DSM 15171 / DSS-3) (Silicibacter pomeroyi) protein is Ubiquinone biosynthesis O-methyltransferase.